The following is a 419-amino-acid chain: WD repeat-containing protein JIP5 (419 aa).

WD repeat units lie at residues 4-45 (ALSS…HNQS), 66-105 (PSHK…VKAR), 108-147 (RAHE…EGDA), 180-220 (DQED…KGVE), 224-263 (DQED…LDHA), 268-308 (GHPS…GIVG), and 351-390 (DAAE…QPPP). Positions 172 to 192 (DPPRSKKKDQEDDLKRKRDEE) are disordered. The tract at residues 372 to 408 (SADGSDESAGESDVMQPPPATKRRTAKSKAGKKSVHD) is disordered. Over residues 392-404 (TKRRTAKSKAGKK) the composition is skewed to basic residues.

The protein belongs to the WD repeat WDR55 family.

It localises to the nucleus. Its subcellular location is the nucleolus. The protein is WD repeat-containing protein JIP5 (JIP5) of Malassezia globosa (strain ATCC MYA-4612 / CBS 7966) (Dandruff-associated fungus).